The following is a 233-amino-acid chain: MDIGSNEILVASDYDRTLASEENNFVISPIVSQKVNEFSKKYKFVVVTGREKKFIDKLAVGLKPTAWILENGSLILFNDREFVLCEKSWFERDRKKIIEILDNLKVRYSIGRIILYVDGYGSKLDMLSEIEKYGRIEVNRNDAMILPKGVDKGVGVLKFKELTGFKGKIIALGDSENDYALFRVADIKVAVANAIPQIKEIADIVTENPNGLGVVEILDKILSGNFGKEVDIY.

Catalysis depends on Asp13, which acts as the Nucleophile. Asp13 and Asp15 together coordinate Mg(2+). Residue Lys152 coordinates substrate. Residues Asp174 and Asp178 each contribute to the Mg(2+) site.

It belongs to the archaeal SPP-like hydrolase family. Mg(2+) is required as a cofactor.

It carries out the reaction 2-phosphoglycolate + H2O = glycolate + phosphate. Functionally, catalyzes the dephosphorylation of 2-phosphoglycolate. The sequence is that of Phosphoglycolate phosphatase 2 from Saccharolobus solfataricus (strain ATCC 35092 / DSM 1617 / JCM 11322 / P2) (Sulfolobus solfataricus).